The primary structure comprises 641 residues: 1-deoxy-D-xylulose-5-phosphate synthase (641 aa).

Residues His-79 and 120–122 contribute to the thiamine diphosphate site; that span reads AHS. Position 151 (Asp-151) interacts with Mg(2+). Thiamine diphosphate contacts are provided by residues 152–153, Asn-180, Tyr-290, and Glu-372; that span reads GA. Residue Asn-180 participates in Mg(2+) binding.

Belongs to the transketolase family. DXPS subfamily. In terms of assembly, homodimer. The cofactor is Mg(2+). Thiamine diphosphate serves as cofactor.

It catalyses the reaction D-glyceraldehyde 3-phosphate + pyruvate + H(+) = 1-deoxy-D-xylulose 5-phosphate + CO2. The protein operates within metabolic intermediate biosynthesis; 1-deoxy-D-xylulose 5-phosphate biosynthesis; 1-deoxy-D-xylulose 5-phosphate from D-glyceraldehyde 3-phosphate and pyruvate: step 1/1. Catalyzes the acyloin condensation reaction between C atoms 2 and 3 of pyruvate and glyceraldehyde 3-phosphate to yield 1-deoxy-D-xylulose-5-phosphate (DXP). This chain is 1-deoxy-D-xylulose-5-phosphate synthase, found in Bradyrhizobium sp. (strain ORS 278).